The primary structure comprises 130 residues: Ribosome-binding factor A (130 aa).

The protein belongs to the RbfA family. Monomer. Binds 30S ribosomal subunits, but not 50S ribosomal subunits or 70S ribosomes.

The protein resides in the cytoplasm. In terms of biological role, one of several proteins that assist in the late maturation steps of the functional core of the 30S ribosomal subunit. Associates with free 30S ribosomal subunits (but not with 30S subunits that are part of 70S ribosomes or polysomes). Required for efficient processing of 16S rRNA. May interact with the 5'-terminal helix region of 16S rRNA. The chain is Ribosome-binding factor A from Prochlorococcus marinus (strain MIT 9301).